A 208-amino-acid chain; its full sequence is MNVNVINHPLVRHKLTLMREADCSTYKFRTLAIELARLMAYEASRDFEIEKYLIDGWCGQIEGDRIKGKTLTVVPILRAGLGMLDGVLDLIPTAKISVVGLQRDEETLKPVSYFEKFVDSMDERPALIIDPMLATGGSMVATIDLLKAKGCKNIKALVLVAAPEGVKAVNDAHPDVTIYTAALDSHLNENGYIIPGLGDAGDKIFGTR.

5-phospho-alpha-D-ribose 1-diphosphate is bound by residues arginine 78, arginine 103, and 130-138 (DPMLATGGS). Uracil contacts are provided by residues isoleucine 193 and 198-200 (GDA). Aspartate 199 provides a ligand contact to 5-phospho-alpha-D-ribose 1-diphosphate.

It belongs to the UPRTase family. It depends on Mg(2+) as a cofactor.

It catalyses the reaction UMP + diphosphate = 5-phospho-alpha-D-ribose 1-diphosphate + uracil. Its pathway is pyrimidine metabolism; UMP biosynthesis via salvage pathway; UMP from uracil: step 1/1. Allosterically activated by GTP. In terms of biological role, catalyzes the conversion of uracil and 5-phospho-alpha-D-ribose 1-diphosphate (PRPP) to UMP and diphosphate. This chain is Uracil phosphoribosyltransferase, found in Neisseria meningitidis serogroup C (strain 053442).